The chain runs to 488 residues: MSNSVEERTRIKNERYESGVIPYAKMGYWDPEYAVKDTDILALFRVSPQPGVDPIEASAAVAGESSTATWTVVWTDLLTACDLYRAKAYKVDAVPNTSDQYFAYIAYDIDLFEEGSIANLTASIIGNVFGFKAIKALRLEDMRIPVAYLKTIQGPATGIIVERERMDKFGRPFLGPTVKPKLGLSGKNYGRVVYEGLRGGLDFLKDDENINSQPFMRWKERFLYSMEAVNRSIAATGEVKGHYMNVTASTMEDMYERAEFAKQLGTVIIMIDLVIGYTAIQSMGIWARKNDMILHLHRAGNSTYSRQKIHGMNFRVICKWMRMAGVDHIHAGTVVGKLEGDPLMIRGFYNTLLLSELAIDLPKGIFFEQDWAALRKVTPVASGGIHCGQMHQLLDYLGNDVVLQFGGGTIGHPDGIQAGATANRVALESMVIARNEERDYVAEGPQILLDAAKTCGPLQTALDLWKDITFNYTSTDTADFVETPTANV.

Residues N127 and T177 each coordinate substrate. K179 (proton acceptor) is an active-site residue. Substrate is bound at residue K181. Positions 205, 207, and 208 each coordinate Mg(2+). An N6-carboxylysine modification is found at K205. The active-site Proton acceptor is the H297. Residues R298, H330, and S382 each contribute to the substrate site.

Belongs to the RuBisCO large chain family. Type I subfamily. In terms of assembly, heterohexadecamer of 8 large chains and 8 small chains. Mg(2+) serves as cofactor.

It is found in the plastid. It localises to the chloroplast. It carries out the reaction 2 (2R)-3-phosphoglycerate + 2 H(+) = D-ribulose 1,5-bisphosphate + CO2 + H2O. The catalysed reaction is D-ribulose 1,5-bisphosphate + O2 = 2-phosphoglycolate + (2R)-3-phosphoglycerate + 2 H(+). Its function is as follows. RuBisCO catalyzes two reactions: the carboxylation of D-ribulose 1,5-bisphosphate, the primary event in carbon dioxide fixation, as well as the oxidative fragmentation of the pentose substrate in the photorespiration process. Both reactions occur simultaneously and in competition at the same active site. The polypeptide is Ribulose bisphosphate carboxylase large chain (Antithamnion sp. (Red alga)).